Consider the following 491-residue polypeptide: Transmembrane protein 200A (491 aa).

Residues 1-61 lie on the Cytoplasmic side of the membrane; sequence MIATGGVITG…RGKIRLYSPS (61 aa). The tract at residues 16–41 is disordered; that stretch reads RQDSARSQQHVNLSPSPATQEKKPIR. Polar residues predominate over residues 20-34; that stretch reads ARSQQHVNLSPSPAT. The chain crosses the membrane as a helical span at residues 62–82; sequence GFFLILGVLISIIGIAMAVLG. At 83–126 the chain is on the extracellular side; the sequence is YWPQKEHFIDAETTLSTNETQVIRNEGGVVVRFFEQHLHSDKMK. Asn-100 carries N-linked (GlcNAc...) asparagine glycosylation. The helical transmembrane segment at 127-147 threads the bilayer; it reads MLGPFTMGIGIFIFICANAIL. Residues 148–491 lie on the Cytoplasmic side of the membrane; it reads HENRDKETKI…LKRGTSETRF (344 aa). A Phosphoserine modification is found at Ser-350.

Belongs to the TMEM200 family. As to expression, expressed in cerebellum.

Its subcellular location is the membrane. This is Transmembrane protein 200A (TMEM200A) from Homo sapiens (Human).